We begin with the raw amino-acid sequence, 121 residues long: Aspartate 1-decarboxylase (121 aa).

S25 (schiff-base intermediate with substrate; via pyruvic acid) is an active-site residue. Pyruvic acid (Ser) is present on S25. T57 is a substrate binding site. The active-site Proton donor is Y58. Position 73–75 (G73–A75) interacts with substrate.

It belongs to the PanD family. In terms of assembly, heterooctamer of four alpha and four beta subunits. It depends on pyruvate as a cofactor. In terms of processing, is synthesized initially as an inactive proenzyme, which is activated by self-cleavage at a specific serine bond to produce a beta-subunit with a hydroxyl group at its C-terminus and an alpha-subunit with a pyruvoyl group at its N-terminus.

The protein localises to the cytoplasm. The catalysed reaction is L-aspartate + H(+) = beta-alanine + CO2. The protein operates within cofactor biosynthesis; (R)-pantothenate biosynthesis; beta-alanine from L-aspartate: step 1/1. In terms of biological role, catalyzes the pyruvoyl-dependent decarboxylation of aspartate to produce beta-alanine. This Maricaulis maris (strain MCS10) (Caulobacter maris) protein is Aspartate 1-decarboxylase.